Reading from the N-terminus, the 123-residue chain is Unclassified hydrophobin 9 (123 aa).

Residues 1 to 24 (MFFFNTKPIVFLVVLSVVATFAAA) form the signal peptide. 4 cysteine pairs are disulfide-bonded: C37/C103, C45/C97, C46/C88, and C104/C117.

This sequence belongs to the fungal hydrophobin family. In terms of assembly, self-assembles to form functional amyloid fibrils called rodlets. Self-assembly into fibrillar rodlets occurs spontaneously at hydrophobic:hydrophilic interfaces and the rodlets further associate laterally to form amphipathic monolayers.

The protein localises to the secreted. It localises to the cell wall. Aerial growth, conidiation, and dispersal of filamentous fungi in the environment rely upon a capability of their secreting small amphipathic proteins called hydrophobins (HPBs) with low sequence identity. Class I can self-assemble into an outermost layer of rodlet bundles on aerial cell surfaces, conferring cellular hydrophobicity that supports fungal growth, development and dispersal; whereas Class II form highly ordered films at water-air interfaces through intermolecular interactions but contribute nothing to the rodlet structure. In Pleurotus ostreatus (strain PC15) (Oyster mushroom), this protein is Unclassified hydrophobin 9.